The chain runs to 296 residues: 4-diphosphocytidyl-2-C-methyl-D-erythritol kinase (296 aa).

The active site involves lysine 22. 105–115 (PMGGGLGGGSS) contributes to the ATP binding site. Residue aspartate 147 is part of the active site.

This sequence belongs to the GHMP kinase family. IspE subfamily.

It carries out the reaction 4-CDP-2-C-methyl-D-erythritol + ATP = 4-CDP-2-C-methyl-D-erythritol 2-phosphate + ADP + H(+). It functions in the pathway isoprenoid biosynthesis; isopentenyl diphosphate biosynthesis via DXP pathway; isopentenyl diphosphate from 1-deoxy-D-xylulose 5-phosphate: step 3/6. Its function is as follows. Catalyzes the phosphorylation of the position 2 hydroxy group of 4-diphosphocytidyl-2C-methyl-D-erythritol. This Photobacterium profundum (strain SS9) protein is 4-diphosphocytidyl-2-C-methyl-D-erythritol kinase.